We begin with the raw amino-acid sequence, 352 residues long: Protein RecA (352 aa).

67–74 (GPESSGKT) lines the ATP pocket.

Belongs to the RecA family.

It localises to the cytoplasm. In terms of biological role, can catalyze the hydrolysis of ATP in the presence of single-stranded DNA, the ATP-dependent uptake of single-stranded DNA by duplex DNA, and the ATP-dependent hybridization of homologous single-stranded DNAs. It interacts with LexA causing its activation and leading to its autocatalytic cleavage. The protein is Protein RecA of Klebsiella pneumoniae subsp. pneumoniae (strain ATCC 700721 / MGH 78578).